An 803-amino-acid chain; its full sequence is Sensor histidine kinase CheAY (803 aa).

Phosphohistidine is present on histidine 47. Disordered stretches follow at residues 134–185 (LESA…DEPD) and 209–255 (EADK…ENKA). 3 stretches are compositionally biased toward basic and acidic residues: residues 136-166 (SAKE…ENKA), 209-226 (EADK…KPKQ), and 233-254 (ETPK…EENK). The region spanning 270–517 (RLDHLMNLIG…TQKLKIPLTL (248 aa)) is the Histidine kinase domain. Histidine 273 carries the post-translational modification Phosphohistidine; by autocatalysis. Residues 519–653 (IIQALLVGVQ…VGAMMDMAKS (135 aa)) enclose the CheW-like domain. Residues 678–796 (IVLAIDDSST…YLTTVVKRSI (119 aa)) enclose the Response regulatory domain. Aspartate 729 is modified (4-aspartylphosphate).

In terms of processing, autophosphorylated.

The enzyme catalyses ATP + protein L-histidine = ADP + protein N-phospho-L-histidine.. Member of the two-component regulatory system CheAY/CheY that regulates chemotaxis and colonization of the gastric mucosa. Functions as a sensor protein kinase which is autophosphorylated at a histidine residue and transfers its phosphate group to the conserved aspartic acid residue in the regulatory domain of CheY. In turn, phosphorylated CheY (CheY-P) interacts with the flagellar motor protein FliM to cause clockwise flagellar rotation and bacterial reversals, as opposed to straight swimming when CheY is not phosphorylated. The sequence is that of Sensor histidine kinase CheAY (cheAY) from Helicobacter pylori (strain ATCC 700392 / 26695) (Campylobacter pylori).